Consider the following 793-residue polypeptide: Protocadherin beta-7 (793 aa).

An N-terminal signal peptide occupies residues 1–26 (MEARVERAVQKRQVLFLCVFLGMSWA). At 27–688 (GAEPLRYFVA…DQANLLTVYL (662 aa)) the chain is on the extracellular side. Cadherin domains follow at residues 35–133 (VAEE…APVF), 138–242 (ISLK…APDF), 247–347 (YKVQ…RPEL), 352–451 (LTSP…APAF), and 456–561 (YTLF…SPFV). Asparagine 169 carries an N-linked (GlcNAc...) asparagine glycan. Asparagine 418 and asparagine 436 each carry an N-linked (GlcNAc...) asparagine glycan. Asparagine 567 carries an N-linked (GlcNAc...) asparagine glycan. A Cadherin 6 domain is found at 568–671 (SSAPCTEPLP…LVDGFSQPYL (104 aa)). The helical transmembrane segment at 689-709 (VVALASVSSLFLLSVLLFVAV) threads the bilayer. Over 710-793 (RLCRRSRAAP…NRPFQNNLGF (84 aa)) the chain is Cytoplasmic.

It is found in the cell membrane. Potential calcium-dependent cell-adhesion protein. May be involved in the establishment and maintenance of specific neuronal connections in the brain. The chain is Protocadherin beta-7 (PCDHB7) from Pan troglodytes (Chimpanzee).